Consider the following 299-residue polypeptide: 4-diphosphocytidyl-2-C-methyl-D-erythritol kinase (299 aa).

The active site involves K17. Residue 103–113 participates in ATP binding; that stretch reads PVASGIGGGSG. D145 is an active-site residue.

It belongs to the GHMP kinase family. IspE subfamily.

The enzyme catalyses 4-CDP-2-C-methyl-D-erythritol + ATP = 4-CDP-2-C-methyl-D-erythritol 2-phosphate + ADP + H(+). It functions in the pathway isoprenoid biosynthesis; isopentenyl diphosphate biosynthesis via DXP pathway; isopentenyl diphosphate from 1-deoxy-D-xylulose 5-phosphate: step 3/6. Its function is as follows. Catalyzes the phosphorylation of the position 2 hydroxy group of 4-diphosphocytidyl-2C-methyl-D-erythritol. In Bartonella tribocorum (strain CIP 105476 / IBS 506), this protein is 4-diphosphocytidyl-2-C-methyl-D-erythritol kinase.